Reading from the N-terminus, the 78-residue chain is Large ribosomal subunit protein bL28 (78 aa).

It belongs to the bacterial ribosomal protein bL28 family.

In Thioalkalivibrio sulfidiphilus (strain HL-EbGR7), this protein is Large ribosomal subunit protein bL28.